A 328-amino-acid chain; its full sequence is Organic solute transporter alpha-like protein (328 aa).

At 1 to 44 the chain is on the extracellular side; sequence MNASENYFTMDPTENISQVLDQNRNNTNSLRTHPTVEEYYENMT. N2, N15, N25, and N42 each carry an N-linked (GlcNAc...) asparagine glycan. A helical transmembrane segment spans residues 45-65; sequence AFLSLAIFIASLLTILNISIF. Residues 66–84 are Cytoplasmic-facing; it reads ATTVSRLRRHLDKPLLGPS. The helical transmembrane segment at 85-105 threads the bilayer; sequence IMMVGLYPIISVAALVTILVP. Position 106 (Y106) is a topological domain, extracellular. Residues 107-127 traverse the membrane as a helical segment; the sequence is SWFICHTVMHVMFMVGGPVFR. The Cytoplasmic portion of the chain corresponds to 128 to 177; that stretch reads TLLFRYVGSEQNYVKETAGEAVQLNTPPCCCCCLCLPMVIPTKAKLCISR. The chain crosses the membrane as a helical span at residues 178-198; it reads YMVWQMPFWQGSIMLVMNILY. The Extracellular portion of the chain corresponds to 199–208; it reads YRDIQLYRQV. The chain crosses the membrane as a helical span at residues 209 to 229; that stretch reads MFFFIPFIVCSIVLGAWSLQI. Residues 230–247 are Cytoplasmic-facing; the sequence is TVRMITKVRGDYQLRKKM. The helical transmembrane segment at 248–265 threads the bilayer; the sequence is FCLQLVVMLCKLQYLVLY. Residues 266-287 are Extracellular-facing; that stretch reads DQLDGIKMGGEYPINHTVYKQT. N280 carries an N-linked (GlcNAc...) asparagine glycan. Residues 288–308 traverse the membrane as a helical segment; sequence IINILILVEMVLVSMMVQSAY. Over 309–328 the chain is Cytoplasmic; that stretch reads RTPVQVQIDEVNKEKEVTRI.

The protein belongs to the OST-alpha family.

The protein localises to the cell membrane. Functionally, probable transporter. The polypeptide is Organic solute transporter alpha-like protein (Drosophila melanogaster (Fruit fly)).